We begin with the raw amino-acid sequence, 202 residues long: Na(+)-translocating NADH-quinone reductase subunit E (202 aa).

6 consecutive transmembrane segments (helical) span residues 11-31 (AVFIENLALSFFLGMCTFLAV), 35-55 (VTTSIGLGVAVIVVLGISVPV), 81-101 (FLRFLTFIGVIAALVQILEMA), 114-134 (GIFLPLITVNCAIFGAVSFMV), 144-164 (VVYGIGAGVGWALAITLLAGI), and 180-200 (LGITFITVGLMALGFMSFSGI).

This sequence belongs to the NqrDE/RnfAE family. Composed of six subunits; NqrA, NqrB, NqrC, NqrD, NqrE and NqrF.

It localises to the cell inner membrane. The catalysed reaction is a ubiquinone + n Na(+)(in) + NADH + H(+) = a ubiquinol + n Na(+)(out) + NAD(+). Functionally, NQR complex catalyzes the reduction of ubiquinone-1 to ubiquinol by two successive reactions, coupled with the transport of Na(+) ions from the cytoplasm to the periplasm. NqrA to NqrE are probably involved in the second step, the conversion of ubisemiquinone to ubiquinol. The chain is Na(+)-translocating NADH-quinone reductase subunit E from Pseudoalteromonas translucida (strain TAC 125).